Consider the following 449-residue polypeptide: Aminopeptidase C (449 aa).

Residues Cys70, His364, and Asn385 contribute to the active site.

The protein belongs to the peptidase C1 family. Homohexamer.

Its subcellular location is the cytoplasm. It catalyses the reaction Inactivates bleomycin B2 (a cytotoxic glycometallopeptide) by hydrolysis of a carboxyamide bond of beta-aminoalanine, but also shows general aminopeptidase activity. The specificity varies somewhat with source, but amino acid arylamides of Met, Leu and Ala are preferred.. This Lactobacillus delbrueckii subsp. lactis protein is Aminopeptidase C (pepC).